A 292-amino-acid chain; its full sequence is 33 kDa chaperonin (292 aa).

Cystine bridges form between Cys-230-Cys-232 and Cys-263-Cys-266.

It belongs to the HSP33 family. In terms of processing, under oxidizing conditions two disulfide bonds are formed involving the reactive cysteines. Under reducing conditions zinc is bound to the reactive cysteines and the protein is inactive.

It localises to the cytoplasm. Redox regulated molecular chaperone. Protects both thermally unfolding and oxidatively damaged proteins from irreversible aggregation. Plays an important role in the bacterial defense system toward oxidative stress. The protein is 33 kDa chaperonin of Salmonella choleraesuis (strain SC-B67).